A 745-amino-acid polypeptide reads, in one-letter code: UPF0508 protein YJR030C (745 aa).

The protein belongs to the UPF0508 family.

The sequence is that of UPF0508 protein YJR030C from Saccharomyces cerevisiae (strain ATCC 204508 / S288c) (Baker's yeast).